We begin with the raw amino-acid sequence, 296 residues long: Polyamine aminopropyltransferase (296 aa).

The PABS domain maps to 16–251 (HLWYFEYYTG…GMWSYTFASK (236 aa)). Residue Gln-46 participates in S-methyl-5'-thioadenosine binding. Spermidine-binding residues include His-77 and Asp-101. Residues Glu-121 and 152 to 153 (NG) each bind S-methyl-5'-thioadenosine. The active-site Proton acceptor is Asp-170. Position 170 to 173 (170 to 173 (DSTD)) interacts with spermidine.

This sequence belongs to the spermidine/spermine synthase family. Homotetramer.

The protein localises to the cytoplasm. It catalyses the reaction S-adenosyl 3-(methylsulfanyl)propylamine + putrescine = S-methyl-5'-thioadenosine + spermidine + H(+). It functions in the pathway amine and polyamine biosynthesis; spermidine biosynthesis; spermidine from putrescine: step 1/1. With respect to regulation, strongly inhibited by S-adenosyl-1,8-diamino-3-thiooctane. Its function is as follows. Catalyzes the irreversible transfer of a propylamine group from the amino donor S-adenosylmethioninamine (decarboxy-AdoMet) to putrescine (1,4-diaminobutane) to yield spermidine. It has lower affinity and lower activity towards 1,3-diaminopropane, cadaverine (1,5-diaminopentane), agmatine, norspermidine and spermidine (in vitro). The sequence is that of Polyamine aminopropyltransferase from Thermotoga maritima (strain ATCC 43589 / DSM 3109 / JCM 10099 / NBRC 100826 / MSB8).